The primary structure comprises 500 residues: L-arabinose isomerase (500 aa).

Residues glutamate 306, glutamate 333, histidine 350, and histidine 450 each contribute to the Mn(2+) site.

It belongs to the arabinose isomerase family. As to quaternary structure, homohexamer. The cofactor is Mn(2+).

It catalyses the reaction beta-L-arabinopyranose = L-ribulose. It participates in carbohydrate degradation; L-arabinose degradation via L-ribulose; D-xylulose 5-phosphate from L-arabinose (bacterial route): step 1/3. Its function is as follows. Catalyzes the conversion of L-arabinose to L-ribulose. The chain is L-arabinose isomerase from Shigella boydii serotype 18 (strain CDC 3083-94 / BS512).